The primary structure comprises 193 residues: UPF0301 protein SAV_5129 (193 aa).

The protein belongs to the UPF0301 (AlgH) family.

The chain is UPF0301 protein SAV_5129 from Streptomyces avermitilis (strain ATCC 31267 / DSM 46492 / JCM 5070 / NBRC 14893 / NCIMB 12804 / NRRL 8165 / MA-4680).